The chain runs to 133 residues: Large ribosomal subunit protein uL16 (133 aa).

Belongs to the universal ribosomal protein uL16 family. As to quaternary structure, part of the 50S ribosomal subunit.

Its function is as follows. Binds 23S rRNA and is also seen to make contacts with the A and possibly P site tRNAs. This Blochmanniella floridana protein is Large ribosomal subunit protein uL16.